An 899-amino-acid polypeptide reads, in one-letter code: Protein argonaute (899 aa).

Residues Thr-107–Thr-129 form a disordered region. The segment covering Arg-116–Gly-125 has biased composition (gly residues). In terms of domain architecture, PAZ spans Ser-229–Leu-313. Residues Leu-555–Gly-878 form the Piwi domain.

It belongs to the argonaute family. Ago subfamily. In terms of assembly, interacts with miR2. Highly specific binding to the mRNA m7G-cap. May be a component of the RNA-induced silencing complex (RISC), a sequence-specific, multicomponent nuclease that destroys or silences messenger RNAs homologous to the silencing trigger.

The protein localises to the cytoplasm. Plays an essential role in growth and, with Dicer, also involved in microRNA (miRNA)-mediated translational repression. The RNA interference pathway is implicated in antigenic variation having a role in regulation of variant-specific surface protein (VSP)-coding gene expression. Several VSP genes are transcribed but only transcripts encoding the VSP to be expressed accumulate. Antisense RNAs corresponding to the silenced VSP genes are detected. This Giardia intestinalis (strain ATCC 50581 / GS clone H7) (Giardia lamblia) protein is Protein argonaute.